The sequence spans 410 residues: Succinyl-CoA:(R)-benzylsuccinate CoA-transferase subunit BbsE (410 aa).

This sequence belongs to the CoA-transferase III family. As to quaternary structure, heterotetramer composed of 2 BbsE subunits and 2 BbsF subunits.

It carries out the reaction (R)-2-benzylsuccinate + succinyl-CoA = (R)-2-benzylsuccinyl-CoA + succinate. It participates in xenobiotic degradation; toluene degradation. With respect to regulation, inhibited by (S)-benzylsuccinyl-CoA. Its function is as follows. Catalyzes the reversible conversion of (R)-2-benzylsuccinate to (R)-2-benzylsuccinyl-CoA. Inactive with (S)-benzylsuccinate. This chain is Succinyl-CoA:(R)-benzylsuccinate CoA-transferase subunit BbsE (bbsE), found in Thauera aromatica.